Here is a 479-residue protein sequence, read N- to C-terminus: MAQHTVYFPDAFLTQMREAMPSTLSFDDFLAACQRPLRRSIRVNTLKTSVADFLQLTAPYGWTLTPIPWCEEGFWIERDSEDALPLGSTAEHLSGLFYIQEASSMLPVAALFADGNAPQRVMDVAAAPGSKTTQIAARMNNKGAILANEFSASRVKVLHANISRCGISNVALTHFDGRVFGAAVPEMFDAILLDAPCSGEGVVRKDPDALKNWSPESNQEIAATQRELIDSAFHALRLGGTLVYSTCTLNREENEAVCLWLKETYHDAVEFLPLGDLFPGANKALTEDGFLHVFPQIYDCEGFFVARLRKTQAIPVLPAPKYKVGNFPFSPVKDREAGQIRQAAASVGLNWDENLRLWQRDKELWLFPVGIEALIGKVRFSRLGIKLAETHNKGYRWQHEAVIALASPDNVNAFELTPQEAEEWYRGRDVYPQAAPVADDVLVTFQHQPIGLAKRIGSRLKNSYPRELVRDGKLFTGNA.

S-adenosyl-L-methionine contacts are provided by residues 125-131 (AAAPGSK), Glu-149, Asp-176, and Asp-194. Cys-247 serves as the catalytic Nucleophile.

It belongs to the class I-like SAM-binding methyltransferase superfamily. RsmB/NOP family.

The protein resides in the cytoplasm. It catalyses the reaction cytidine(1407) in 16S rRNA + S-adenosyl-L-methionine = 5-methylcytidine(1407) in 16S rRNA + S-adenosyl-L-homocysteine + H(+). Functionally, specifically methylates the cytosine at position 1407 (m5C1407) of 16S rRNA. The chain is Ribosomal RNA small subunit methyltransferase F from Escherichia coli (strain UTI89 / UPEC).